A 448-amino-acid polypeptide reads, in one-letter code: Histidinol dehydrogenase (448 aa).

3 residues coordinate NAD(+): Y136, Q197, and N220. Residues S243, Q265, and H268 each coordinate substrate. Zn(2+)-binding residues include Q265 and H268. Residues E333 and H334 each act as proton acceptor in the active site. Residues H334, D367, E421, and H426 each coordinate substrate. D367 lines the Zn(2+) pocket. Zn(2+) is bound at residue H426.

The protein belongs to the histidinol dehydrogenase family. The cofactor is Zn(2+).

It carries out the reaction L-histidinol + 2 NAD(+) + H2O = L-histidine + 2 NADH + 3 H(+). Its pathway is amino-acid biosynthesis; L-histidine biosynthesis; L-histidine from 5-phospho-alpha-D-ribose 1-diphosphate: step 9/9. In terms of biological role, catalyzes the sequential NAD-dependent oxidations of L-histidinol to L-histidinaldehyde and then to L-histidine. The chain is Histidinol dehydrogenase from Pseudomonas savastanoi pv. phaseolicola (strain 1448A / Race 6) (Pseudomonas syringae pv. phaseolicola (strain 1448A / Race 6)).